Consider the following 257-residue polypeptide: Capsid protein (257 aa).

The Bipartite nuclear localization signal motif lies at 3-20; the sequence is KRTGDILMSSPLSKFRRK. The Nuclear localization signal signature appears at 40–54; it reads KRRSWTYRPMYRKPR. A zinc finger spans residues 68-85; the sequence is CEGPCKVQSYEQRDDVKH. The Nuclear export signal signature appears at 101-122; sequence ITHRVGKRFCIKSIYILGKIWM. Positions 201 to 248 match the Bipartite nuclear localization signal motif; it reads KRFFKVNTHVVYNHQEQAKYENHTENALLLYMACTHASNPVYATLKIR.

The protein belongs to the geminiviridae capsid protein family. As to quaternary structure, homomultimer. Binds to single-stranded and double-stranded viral DNA. Interacts (via nuclear localization signals) with host importin alpha-1a.

It localises to the virion. The protein resides in the host nucleus. Its function is as follows. Encapsidates the viral genome into characteristic twinned ('geminate') particles. Binds the genomic viral ssDNA and shuttles it into and out of the cell nucleus. Plays a role in protection of the genome from degradation, virus acquisition and transmission by insect vectors, infectivity, and systemic movement. The CP of monopartite geminiviruses is absolutely essential for virus movement. This Solanum lycopersicum (Tomato) protein is Capsid protein.